Consider the following 334-residue polypeptide: D-fructose 1,6-bisphosphatase class 2/sedoheptulose 1,7-bisphosphatase (334 aa).

Asp33, Glu57, Asp85, and Glu88 together coordinate Mn(2+). Residues 88 to 90 (EGT), Tyr119, 164 to 166 (RAR), and 186 to 188 (DGD) each bind substrate. Glu213 contributes to the Mn(2+) binding site.

It belongs to the FBPase class 2 family. As to quaternary structure, homotetramer. It depends on Mn(2+) as a cofactor.

It carries out the reaction beta-D-fructose 1,6-bisphosphate + H2O = beta-D-fructose 6-phosphate + phosphate. The catalysed reaction is D-sedoheptulose 1,7-bisphosphate + H2O = D-sedoheptulose 7-phosphate + phosphate. Its pathway is carbohydrate biosynthesis; Calvin cycle. Its function is as follows. Catalyzes the hydrolysis of fructose 1,6-bisphosphate (Fru 1,6-P2) and sedoheptulose 1,7-bisphosphate (Sed 1,7-P2) to fructose 6-phosphate and sedoheptulose 7-phosphate, respectively. The sequence is that of D-fructose 1,6-bisphosphatase class 2/sedoheptulose 1,7-bisphosphatase from Synechococcus sp. (strain RCC307).